Reading from the N-terminus, the 317-residue chain is Ferrochelatase (317 aa).

Fe cation contacts are provided by His192 and Glu271.

It belongs to the ferrochelatase family.

It is found in the cytoplasm. It carries out the reaction heme b + 2 H(+) = protoporphyrin IX + Fe(2+). It functions in the pathway porphyrin-containing compound metabolism; protoheme biosynthesis; protoheme from protoporphyrin-IX: step 1/1. Catalyzes the ferrous insertion into protoporphyrin IX. The polypeptide is Ferrochelatase (Geobacter metallireducens (strain ATCC 53774 / DSM 7210 / GS-15)).